Consider the following 393-residue polypeptide: Cytochrome b (393 aa).

Transmembrane regions (helical) follow at residues 32–52 (FGSL…FLAM), 76–98 (WLIR…LHIG), 113–133 (LWSI…LGYV), and 179–199 (FFSL…MHLL). Heme b contacts are provided by His82 and His96. Residues His183 and His197 each coordinate heme b. His202 lines the a ubiquinone pocket. 4 helical membrane-spanning segments follow: residues 225–245 (FTFK…LFVF), 289–309 (LIGV…PILD), 321–341 (LMRF…FIGS), and 348–368 (YVEI…VVVP).

Belongs to the cytochrome b family. In terms of assembly, fungal cytochrome b-c1 complex contains 10 subunits; 3 respiratory subunits, 2 core proteins and 5 low-molecular weight proteins. Cytochrome b-c1 complex is a homodimer. Heme b is required as a cofactor.

The protein localises to the mitochondrion inner membrane. In terms of biological role, component of the ubiquinol-cytochrome c reductase complex (complex III or cytochrome b-c1 complex) that is part of the mitochondrial respiratory chain. The b-c1 complex mediates electron transfer from ubiquinol to cytochrome c. Contributes to the generation of a proton gradient across the mitochondrial membrane that is then used for ATP synthesis. The chain is Cytochrome b (COB) from Mycosarcoma maydis (Corn smut fungus).